Consider the following 882-residue polypeptide: Alanine--tRNA ligase (882 aa).

Zn(2+) is bound by residues His563, His567, Cys665, and His669.

Belongs to the class-II aminoacyl-tRNA synthetase family. Requires Zn(2+) as cofactor.

It is found in the cytoplasm. The enzyme catalyses tRNA(Ala) + L-alanine + ATP = L-alanyl-tRNA(Ala) + AMP + diphosphate. Catalyzes the attachment of alanine to tRNA(Ala) in a two-step reaction: alanine is first activated by ATP to form Ala-AMP and then transferred to the acceptor end of tRNA(Ala). Also edits incorrectly charged Ser-tRNA(Ala) and Gly-tRNA(Ala) via its editing domain. This chain is Alanine--tRNA ligase, found in Synechococcus sp. (strain RCC307).